The primary structure comprises 573 residues: Urease subunit alpha (573 aa).

Residues 136–573 form the Urease domain; it reads GAIDCHVHLI…LPMAQRYFLF (438 aa). H141, H143, and K224 together coordinate Ni(2+). N6-carboxylysine is present on K224. Residue H226 participates in substrate binding. 2 residues coordinate Ni(2+): H253 and H279. The active-site Proton donor is the H327. Position 367 (D367) interacts with Ni(2+).

It belongs to the metallo-dependent hydrolases superfamily. Urease alpha subunit family. Heterotrimer of UreA (gamma), UreB (beta) and UreC (alpha) subunits. Three heterotrimers associate to form the active enzyme. The cofactor is Ni cation. In terms of processing, carboxylation allows a single lysine to coordinate two nickel ions.

The protein resides in the cytoplasm. It carries out the reaction urea + 2 H2O + H(+) = hydrogencarbonate + 2 NH4(+). It functions in the pathway nitrogen metabolism; urea degradation; CO(2) and NH(3) from urea (urease route): step 1/1. The sequence is that of Urease subunit alpha from Mycobacterium sp. (strain JLS).